The following is a 436-amino-acid chain: 3-hydroxy-3-methylglutaryl-coenzyme A reductase (436 aa).

Active-site charge relay system residues include glutamate 99, lysine 277, and aspartate 293. Histidine 390 acts as the Proton donor in catalysis.

Belongs to the HMG-CoA reductase family.

It catalyses the reaction (R)-mevalonate + 2 NADP(+) + CoA = (3S)-3-hydroxy-3-methylglutaryl-CoA + 2 NADPH + 2 H(+). It functions in the pathway metabolic intermediate biosynthesis; (R)-mevalonate biosynthesis; (R)-mevalonate from acetyl-CoA: step 3/3. Functionally, converts HMG-CoA to mevalonate. The chain is 3-hydroxy-3-methylglutaryl-coenzyme A reductase (hmgA) from Archaeoglobus fulgidus (strain ATCC 49558 / DSM 4304 / JCM 9628 / NBRC 100126 / VC-16).